The primary structure comprises 541 residues: Acyl-CoA ligase M9 (541 aa).

Residue 186 to 197 (AMSTSGTTGLPK) participates in AMP binding. Positions 445–519 (ELEAVLHQMP…DSLPRNSSGK (75 aa)) are AMP-binding.

Belongs to the ATP-dependent AMP-binding enzyme family.

It functions in the pathway secondary metabolite biosynthesis. Functionally, acyl-CoA ligase; part of the gene cluster that mediates the biosynthesis of squalestatin S1 (SQS1, also known as zaragozic acid A), a heavily oxidized fungal polyketide that offers potent cholesterol lowering activity by targeting squalene synthase (SS). SQS1 is composed of a 2,8-dioxobicyclic[3.2.1]octane-3,4,5-tricarboxyclic acid core that is connected to two lipophilic polyketide arms. These initial steps feature the priming of an unusual benzoic acid starter unit onto the highly reducing polyketide synthase pks2, followed by oxaloacetate extension and product release to generate a tricarboxylic acid containing product. The phenylalanine ammonia lyase (PAL) M7 and the acyl-CoA ligase M9 are involved in transforming phenylalanine into benzoyl-CoA. The citrate synthase-like protein R3 is involved in connecting the C-alpha-carbons of the hexaketide chain and oxaloacetate to afford the tricarboxylic acid unit. The potential hydrolytic enzymes, M8 and M10, are in close proximity to pks2 and may participate in product release. On the other side, the tetraketide arm is synthesized by a the squalestatin tetraketide synthase pks1 and enzymatically esterified to the core in the last biosynthetic step, by the acetyltransferase M4. The biosynthesis of the tetraketide must involve 3 rounds of chain extension. After the first and second rounds methyl-transfer occurs, and in all rounds of extension the ketoreductase and dehydratase are active. The enoyl reductase and C-MeT of pks1 are not active in the final round of extension. The acetyltransferase M4 appears to have a broad substrate selectivity for its acyl CoA substrate, allowing the in vitro synthesis of novel squalestatins. The biosynthesis of SQS1 requires several oxidative steps likely performed by oxidoreductases M1, R1 and R2. Finally, in support of the identification of the cluster as being responsible for SQS1 production, the cluster contains a gene encoding a putative squalene synthase (SS) R6, suggesting a likely mechanism for self-resistance. In Phoma sp. (strain ATCC 20986 / MF5453), this protein is Acyl-CoA ligase M9.